We begin with the raw amino-acid sequence, 591 residues long: PDZ and LIM domain protein 5 (591 aa).

Ser2 carries the N-acetylserine modification. The residue at position 2 (Ser2) is a Phosphoserine. Residues 2-85 (SNYNVSLVGP…SLNMTLQRAS (84 aa)) enclose the PDZ domain. Lys89 carries the post-translational modification N6-acetyllysine; alternate. Residue Lys89 is modified to N6-succinyllysine; alternate. Lys89 participates in a covalent cross-link: Glycyl lysine isopeptide (Lys-Gly) (interchain with G-Cter in SUMO2); alternate. Ser111, Ser134, and Ser137 each carry phosphoserine. Disordered stretches follow at residues 125–240 (YNKV…GPPR) and 255–334 (THSD…SNRP). Positions 134–143 (SVSSPKVTSI) are enriched in polar residues. The segment covering 144–161 (PSPSSAFTPAHAATSSHA) has biased composition (low complexity). Positions 162–174 (SPPPVAAVTPPPL) are enriched in pro residues. Polar residues-rich tracts occupy residues 183-195 (ANPSAAQCSSPPN) and 207-217 (PTVTSVCSESA). Phosphoserine occurs at positions 228 and 260. Composition is skewed to basic and acidic residues over residues 258–273 (DASKKRLIEDTEDWRP) and 293–304 (EHLKESENDNAK). The span at 310-329 (PEPSQQSASPLSAAESLESP) shows a compositional bias: low complexity. A phosphoserine mark is found at Ser313 and Ser318. N6-acetyllysine is present on Lys346. A disordered region spans residues 348-398 (VGSTSVKSPSWQRPNQAAPSTGRISNSASSSGTGAPMKPAVGPPQPSDQDT). Residues 349-380 (GSTSVKSPSWQRPNQAAPSTGRISNSASSSGT) are compositionally biased toward polar residues. Phosphoserine occurs at positions 355 and 357. 3 consecutive LIM zinc-binding domains span residues 413 to 472 (PMCA…FFAP), 472 to 531 (PECG…LFGT), and 531 to 591 (TICR…SVNF).

As to quaternary structure, interacts with various PKC isoforms through the LIM domains. Interacts with actin and alpha-actinin through the PDZ domain. Interacts (via LIM domains) with SIPA1L1/SPAR; this interaction may occur preferentially with isoform 1. As to expression, detected in brain, in neurons, including in hippocampal neurons, and glial cells (at protein level). Detected in heart and skeletal muscle.

The protein localises to the postsynaptic density. Its subcellular location is the presynapse. It localises to the postsynapse. The protein resides in the cytoplasm. It is found in the cytosol. Its function is as follows. May play an important role in the heart development by scaffolding PKC to the Z-disk region. May play a role in the regulation of cardiomyocyte expansion. Isoforms lacking the LIM domains may negatively modulate the scaffolding activity of isoform 1. Overexpression promotes the development of heart hypertrophy. Contributes to the regulation of dendritic spine morphogenesis in neurons. May be required to restrain postsynaptic growth of excitatory synapses. Isoform 1, but not isoform 2, expression favors spine thinning and elongation. This is PDZ and LIM domain protein 5 (Pdlim5) from Rattus norvegicus (Rat).